A 160-amino-acid polypeptide reads, in one-letter code: Lipoprotein signal peptidase (160 aa).

2 consecutive transmembrane segments (helical) span residues 59-79 (PEGILLLALAISAGLTWYVWI) and 84-104 (SPLFILTFALILGGGLGNLID). Active-site residues include D113 and D139. Residues 132–152 (WPIFNIADACITIGACLLFFF) traverse the membrane as a helical segment.

It belongs to the peptidase A8 family.

It is found in the cell inner membrane. The enzyme catalyses Release of signal peptides from bacterial membrane prolipoproteins. Hydrolyzes -Xaa-Yaa-Zaa-|-(S,diacylglyceryl)Cys-, in which Xaa is hydrophobic (preferably Leu), and Yaa (Ala or Ser) and Zaa (Gly or Ala) have small, neutral side chains.. It participates in protein modification; lipoprotein biosynthesis (signal peptide cleavage). This protein specifically catalyzes the removal of signal peptides from prolipoproteins. This Chlorobaculum parvum (strain DSM 263 / NCIMB 8327) (Chlorobium vibrioforme subsp. thiosulfatophilum) protein is Lipoprotein signal peptidase.